Here is a 570-residue protein sequence, read N- to C-terminus: Proline--tRNA ligase (570 aa).

It belongs to the class-II aminoacyl-tRNA synthetase family. ProS type 1 subfamily. In terms of assembly, homodimer.

Its subcellular location is the cytoplasm. It carries out the reaction tRNA(Pro) + L-proline + ATP = L-prolyl-tRNA(Pro) + AMP + diphosphate. Catalyzes the attachment of proline to tRNA(Pro) in a two-step reaction: proline is first activated by ATP to form Pro-AMP and then transferred to the acceptor end of tRNA(Pro). As ProRS can inadvertently accommodate and process non-cognate amino acids such as alanine and cysteine, to avoid such errors it has two additional distinct editing activities against alanine. One activity is designated as 'pretransfer' editing and involves the tRNA(Pro)-independent hydrolysis of activated Ala-AMP. The other activity is designated 'posttransfer' editing and involves deacylation of mischarged Ala-tRNA(Pro). The misacylated Cys-tRNA(Pro) is not edited by ProRS. The sequence is that of Proline--tRNA ligase from Thermoanaerobacter pseudethanolicus (strain ATCC 33223 / 39E) (Clostridium thermohydrosulfuricum).